The sequence spans 454 residues: Natural cytotoxicity triggering receptor 3 ligand 1 (454 aa).

The N-terminal stretch at 1–24 is a signal peptide; it reads MTWRAAASTCAALLILLWALTTEG. The Extracellular portion of the chain corresponds to 25-262; that stretch reads DLKVEMMAGG…SETEKTDNFS (238 aa). One can recognise an Ig-like V-type domain in the interval 27–138; sequence KVEMMAGGTQ…LKAQGTVQLE (112 aa). N-linked (GlcNAc...) asparagine glycans are attached at residues Asn-43 and Asn-57. Cys-48 and Cys-122 form a disulfide bridge. Interaction with NCR3 regions lie at residues 59-62 and 127-130; these read TSMG and TPLK. Residues 143-244 enclose the Ig-like C1-type domain; the sequence is PASRLLLDQV…LHTPLRSNFT (102 aa). The cysteines at positions 163 and 228 are disulfide-linked. N-linked (GlcNAc...) asparagine glycosylation is found at Asn-174, Asn-208, Asn-216, Asn-242, and Asn-260. The chain crosses the membrane as a helical span at residues 263–283; it reads IHWWPISFIGVGLVLLIVLIP. The Cytoplasmic segment spans residues 284-454; that stretch reads WKKICNKSSS…QPPTLLLPLQ (171 aa). The tract at residues 291 to 429 is retroviral-Gag-like; the sequence is SSSAYTPLKC…APILPVSPIW (139 aa). The tract at residues 395-454 is disordered; the sequence is GKSIDDNSTKSEKQTPREHSDAVPDAPILPVSPIWEPPPATTSTTPVLSSQPPTLLLPLQ. Positions 397-416 are enriched in basic and acidic residues; sequence SIDDNSTKSEKQTPREHSDA. Positions 435 to 454 are enriched in low complexity; it reads TTSTTPVLSSQPPTLLLPLQ.

In terms of assembly, monomer. Interacts specifically with NCR3, but not with other natural killer cell-activating receptors, including NCR1, NCR2 and KLRK1. In terms of tissue distribution, not detected in any normal tissue tested. Expressed at the surface of several tumor cell lines including T and B-lymphomas, myeloid leukemias, melanomas, carcinomas and large T SV40 antigen-transformed cells (at protein level).

It localises to the cell membrane. In terms of biological role, triggers NCR3-dependent natural killer cell activation. This Homo sapiens (Human) protein is Natural cytotoxicity triggering receptor 3 ligand 1 (NCR3LG1).